A 361-amino-acid polypeptide reads, in one-letter code: Phosphate acyltransferase (361 aa).

Belongs to the PlsX family. In terms of assembly, homodimer. Probably interacts with PlsY.

The protein localises to the cytoplasm. It carries out the reaction a fatty acyl-[ACP] + phosphate = an acyl phosphate + holo-[ACP]. The protein operates within lipid metabolism; phospholipid metabolism. Catalyzes the reversible formation of acyl-phosphate (acyl-PO(4)) from acyl-[acyl-carrier-protein] (acyl-ACP). This enzyme utilizes acyl-ACP as fatty acyl donor, but not acyl-CoA. The chain is Phosphate acyltransferase from Parvibaculum lavamentivorans (strain DS-1 / DSM 13023 / NCIMB 13966).